A 180-amino-acid chain; its full sequence is Crossover junction endodeoxyribonuclease RuvC (180 aa).

Residues Asp7, Glu66, and Asp138 contribute to the active site. Mg(2+) contacts are provided by Asp7, Glu66, and Asp138.

This sequence belongs to the RuvC family. Homodimer which binds Holliday junction (HJ) DNA. The HJ becomes 2-fold symmetrical on binding to RuvC with unstacked arms; it has a different conformation from HJ DNA in complex with RuvA. In the full resolvosome a probable DNA-RuvA(4)-RuvB(12)-RuvC(2) complex forms which resolves the HJ. It depends on Mg(2+) as a cofactor.

The protein localises to the cytoplasm. The enzyme catalyses Endonucleolytic cleavage at a junction such as a reciprocal single-stranded crossover between two homologous DNA duplexes (Holliday junction).. Functionally, the RuvA-RuvB-RuvC complex processes Holliday junction (HJ) DNA during genetic recombination and DNA repair. Endonuclease that resolves HJ intermediates. Cleaves cruciform DNA by making single-stranded nicks across the HJ at symmetrical positions within the homologous arms, yielding a 5'-phosphate and a 3'-hydroxyl group; requires a central core of homology in the junction. The consensus cleavage sequence is 5'-(A/T)TT(C/G)-3'. Cleavage occurs on the 3'-side of the TT dinucleotide at the point of strand exchange. HJ branch migration catalyzed by RuvA-RuvB allows RuvC to scan DNA until it finds its consensus sequence, where it cleaves and resolves the cruciform DNA. This is Crossover junction endodeoxyribonuclease RuvC from Burkholderia vietnamiensis (strain G4 / LMG 22486) (Burkholderia cepacia (strain R1808)).